A 120-amino-acid chain; its full sequence is Large ribosomal subunit protein eL18 (120 aa).

The protein belongs to the eukaryotic ribosomal protein eL18 family.

The polypeptide is Large ribosomal subunit protein eL18 (Thermoplasma acidophilum (strain ATCC 25905 / DSM 1728 / JCM 9062 / NBRC 15155 / AMRC-C165)).